The sequence spans 462 residues: MGKTLFDKLWNRHVIYGKEGEPQLLYVDLHLIHEVTSPQAFEGLRMENRPLRRPDKTFATMDHNVPTEDIFNIQDLVAKKQIEALQTNCEEFGVTLADMGSDRQGIVHMVGPETGLTQPGKVIVCGDSHTATHGAFGAIGFGIGSSEVEHVFATQTIWQQKPKSMGIEINGKLPKGVYAKDIILHLIATYGVAFGTGYAVEYYGETIRNMSMEERMTICNMAIEGGAKMGMMAPDQTTFEYVRGREYAPSDMEKAIRDWETLKTDPDAEYDLHIEMDASILEPYVTWGTNPEMGVPFSKAFPEIKDMNYERAYEYMGLKPGQTAEEIELGYVFIGSCTNARLSDLEEAARIVKGNKVKNNIRALVVPGSRQVRNAAEAIGLDKIFKDAGFEWREPGCSMCLGMNPDQVPDGVHCASTSNRNFEGRQGKGARTHLVSPAMAAAAAINGHFIDIRKEAVISGGN.

3 residues coordinate [4Fe-4S] cluster: Cys337, Cys397, and Cys400.

Belongs to the aconitase/IPM isomerase family. LeuC type 1 subfamily. In terms of assembly, heterodimer of LeuC and LeuD. [4Fe-4S] cluster serves as cofactor.

It carries out the reaction (2R,3S)-3-isopropylmalate = (2S)-2-isopropylmalate. It functions in the pathway amino-acid biosynthesis; L-leucine biosynthesis; L-leucine from 3-methyl-2-oxobutanoate: step 2/4. Its function is as follows. Catalyzes the isomerization between 2-isopropylmalate and 3-isopropylmalate, via the formation of 2-isopropylmaleate. The protein is 3-isopropylmalate dehydratase large subunit of Listeria innocua serovar 6a (strain ATCC BAA-680 / CLIP 11262).